We begin with the raw amino-acid sequence, 392 residues long: Chaperone protein DnaJ (392 aa).

The 66-residue stretch at 2–67 (DYYTILGVAK…QKRESYDRYG (66 aa)) folds into the J domain. The CR-type zinc finger occupies 149 to 227 (GVEKELLVSG…CRGQGRIKDK (79 aa)). C162, C165, C179, C182, C201, C204, C215, and C218 together coordinate Zn(2+). CXXCXGXG motif repeat units lie at residues 162–169 (CDACSGSG), 179–186 (CDRCKGSG), 201–208 (CPDCSGEG), and 215–222 (CSVCRGQG).

It belongs to the DnaJ family. In terms of assembly, homodimer. Zn(2+) is required as a cofactor.

Its subcellular location is the cytoplasm. Participates actively in the response to hyperosmotic and heat shock by preventing the aggregation of stress-denatured proteins and by disaggregating proteins, also in an autonomous, DnaK-independent fashion. Unfolded proteins bind initially to DnaJ; upon interaction with the DnaJ-bound protein, DnaK hydrolyzes its bound ATP, resulting in the formation of a stable complex. GrpE releases ADP from DnaK; ATP binding to DnaK triggers the release of the substrate protein, thus completing the reaction cycle. Several rounds of ATP-dependent interactions between DnaJ, DnaK and GrpE are required for fully efficient folding. Also involved, together with DnaK and GrpE, in the DNA replication of plasmids through activation of initiation proteins. The sequence is that of Chaperone protein DnaJ from Chlamydia trachomatis serovar L2 (strain ATCC VR-902B / DSM 19102 / 434/Bu).